The chain runs to 343 residues: S-adenosylmethionine:tRNA ribosyltransferase-isomerase (343 aa).

It belongs to the QueA family. As to quaternary structure, monomer.

The protein localises to the cytoplasm. It catalyses the reaction 7-aminomethyl-7-carbaguanosine(34) in tRNA + S-adenosyl-L-methionine = epoxyqueuosine(34) in tRNA + adenine + L-methionine + 2 H(+). It participates in tRNA modification; tRNA-queuosine biosynthesis. In terms of biological role, transfers and isomerizes the ribose moiety from AdoMet to the 7-aminomethyl group of 7-deazaguanine (preQ1-tRNA) to give epoxyqueuosine (oQ-tRNA). This is S-adenosylmethionine:tRNA ribosyltransferase-isomerase from Latilactobacillus sakei subsp. sakei (strain 23K) (Lactobacillus sakei subsp. sakei).